Here is a 452-residue protein sequence, read N- to C-terminus: Protoheme IX farnesyltransferase, mitochondrial (452 aa).

A mitochondrion-targeting transit peptide spans 1–27; sequence MSLVIQPLLMRALNPNLSSILISGRGF. 7 consecutive transmembrane segments (helical) span residues 152 to 172, 235 to 255, 267 to 287, 291 to 311, 341 to 361, 364 to 386, and 417 to 437; these read VLVM…ATVL, ILWL…IALY, IINT…GWAA, LSHP…FPHF, VALR…YFNV, WYYQ…KFYF, and TFWV…LHKK.

Belongs to the UbiA prenyltransferase family.

It localises to the mitochondrion membrane. Functionally, converts protoheme IX and farnesyl diphosphate to heme O. The polypeptide is Protoheme IX farnesyltransferase, mitochondrial (COX10) (Kluyveromyces lactis (strain ATCC 8585 / CBS 2359 / DSM 70799 / NBRC 1267 / NRRL Y-1140 / WM37) (Yeast)).